The chain runs to 302 residues: Bifunctional protein FolD (302 aa).

Residues 168-170 (GRS), threonine 197, and valine 238 contribute to the NADP(+) site.

It belongs to the tetrahydrofolate dehydrogenase/cyclohydrolase family. As to quaternary structure, homodimer.

The enzyme catalyses (6R)-5,10-methylene-5,6,7,8-tetrahydrofolate + NADP(+) = (6R)-5,10-methenyltetrahydrofolate + NADPH. It catalyses the reaction (6R)-5,10-methenyltetrahydrofolate + H2O = (6R)-10-formyltetrahydrofolate + H(+). The protein operates within one-carbon metabolism; tetrahydrofolate interconversion. Functionally, catalyzes the oxidation of 5,10-methylenetetrahydrofolate to 5,10-methenyltetrahydrofolate and then the hydrolysis of 5,10-methenyltetrahydrofolate to 10-formyltetrahydrofolate. In Desulfatibacillum aliphaticivorans, this protein is Bifunctional protein FolD.